Here is a 232-residue protein sequence, read N- to C-terminus: MNKVITDLDKALSALKDGDTILVGGFGLCGIPEYAIDYIYKKGIKDLIVVSNNCGVDDFGLGILLEKKQIKKIIASYVGENKIFESQMLNGEIEVVLTPQGTLAENLHAGGAGIPAYYTPTGVGTLIAQGKESREFNGKEYILERAITGDYGLIKAYKSDTLGNLVFRKTARNFNPLCAMAAKICVAEVEEIVPAGELDPDEIHLPGIYVQHIYKGEKFEKRIEKITTRSTK.

Residue 24-30 (GGFGLCG) participates in CoA binding.

Belongs to the 3-oxoacid CoA-transferase subunit A family. Heterodimer of a subunit A and a subunit B.

It catalyses the reaction a 3-oxo acid + succinyl-CoA = a 3-oxoacyl-CoA + succinate. The protein is Succinyl-CoA:3-ketoacid coenzyme A transferase subunit A (scoA) of Helicobacter pylori (strain ATCC 700392 / 26695) (Campylobacter pylori).